Consider the following 421-residue polypeptide: Inner membrane protein YihN (421 aa).

At 1–44 (MLTKKKWALFSLLTLCGGTIYKLPSLKDAFYIPMQEYFHLTNGQ) the chain is on the periplasmic side. Residues 45-65 (IGNAMSVNSFVTTVGFFLSIY) form a helical membrane-spanning segment. At 66–73 (FADKLPRR) the chain is on the cytoplasmic side. A helical transmembrane segment spans residues 74–91 (YTMSFSLIATGLLGVYLT). Over 92–95 (TMPG) the chain is Periplasmic. The helical transmembrane segment at 96–118 (YWGILFVWALFGVTCDMMNWPVL) threads the bilayer. The Cytoplasmic segment spans residues 119 to 146 (LKSVSRLGNSEQQGRLFGFFETGRGIVD). A helical transmembrane segment spans residues 147-167 (TVVAFSALAVFTWFGSGLLGF). A topological domain (periplasmic) is located at residue K168. The chain crosses the membrane as a helical span at residues 169 to 189 (AGIWFYSLIVIAVGIIIFFVL). At 190–220 (NDKEEAPSVEVKKEDGASKNTSMTSVLKDKT) the chain is on the cytoplasmic side. 2 helical membrane-spanning segments follow: residues 221 to 241 (IWLIAFNVFFVYAVYCGLTFF) and 242 to 262 (IPFLKNIYLLPVALVGAYGII). Topologically, residues 263–288 (NQYCLKMIGGPIGGMISDKILKSPSK) are cytoplasmic. 2 helical membrane passes run 289 to 309 (YLCYTFIISTAALVLLIMLPH) and 310 to 330 (ESMPVYLGMACTLGFGAIVFT). The Cytoplasmic portion of the chain corresponds to 331–354 (QRAVFFAPIGEAKIAENKTGAAMA). A helical transmembrane segment spans residues 355–375 (LGSFIGYAPAMFCFSLYGYIL). The Periplasmic segment spans residues 376-385 (DLNPGIIGYK). Residues 386 to 406 (IVFGIMACFAFSGAVVSVMLV) traverse the membrane as a helical segment. Residues 407–421 (KRISQRKKEMLAAEA) are Cytoplasmic-facing.

Belongs to the major facilitator superfamily.

The protein resides in the cell inner membrane. In Escherichia coli (strain K12), this protein is Inner membrane protein YihN (yihN).